A 285-amino-acid chain; its full sequence is Bifunctional protein FolD (285 aa).

NADP(+)-binding positions include glycine 165–serine 167 and serine 190.

This sequence belongs to the tetrahydrofolate dehydrogenase/cyclohydrolase family. As to quaternary structure, homodimer.

It carries out the reaction (6R)-5,10-methylene-5,6,7,8-tetrahydrofolate + NADP(+) = (6R)-5,10-methenyltetrahydrofolate + NADPH. It catalyses the reaction (6R)-5,10-methenyltetrahydrofolate + H2O = (6R)-10-formyltetrahydrofolate + H(+). It participates in one-carbon metabolism; tetrahydrofolate interconversion. Its function is as follows. Catalyzes the oxidation of 5,10-methylenetetrahydrofolate to 5,10-methenyltetrahydrofolate and then the hydrolysis of 5,10-methenyltetrahydrofolate to 10-formyltetrahydrofolate. The sequence is that of Bifunctional protein FolD from Burkholderia thailandensis (strain ATCC 700388 / DSM 13276 / CCUG 48851 / CIP 106301 / E264).